Here is a 1351-residue protein sequence, read N- to C-terminus: Serine-rich adhesin for platelets (1351 aa).

The first 89 residues, 1-89 (MSKRQKEFHD…VNMLHDQQAF (89 aa)), serve as a signal peptide directing secretion. The serine-rich repeat region 1, SRR1 stretch occupies residues 90-230 (AASDAPLTSE…KTSTTSTSTA (141 aa)). Residues 100–111 (LNTQSETVGNQN) are compositionally biased toward polar residues. Disordered regions lie at residues 100-228 (LNTQ…TSTS) and 751-1323 (NSMS…GLLG). Low complexity-rich tracts occupy residues 112–133 (STTI…NSSS) and 149–228 (NVTS…TSTS). A non-repeat region (NRR) region spans residues 231-751 (PIKLRTFSRL…TTFKYEVTRN (521 aa)). Over residues 752 to 1294 (SMSDSVSTSG…SQSTLSATSE (543 aa)) the composition is skewed to low complexity. The segment at 752 to 1312 (SMSDSVSTSG…AQSEKRLPDT (561 aa)) is serine-rich repeat region 1, SRR1. Residues 1309–1313 (LPDTG) carry the LPXTG sorting signal motif. T1312 is modified (pentaglycyl murein peptidoglycan amidated threonine). The propeptide at 1313–1351 (GDSIKQNGLLGGVMTLLVGLGLMKRKKKKDENDQDDSQA) is removed by sortase.

It belongs to the serine-rich repeat protein (SRRP) family. Post-translationally, proteolytically cleaved by a metalloprotease. In terms of processing, glycosylated. It is probable that most of the Ser residues in SSR1 and SSR2 are O-GlcNAcylated. Sequential glycosylation by sugar transferases are able to generate complex sugar polymorphisms.

The protein localises to the secreted. The protein resides in the cell wall. Mediates binding to human platelets, possibly through a receptor-ligand interaction. Probably associated with virulence in endovascular infection. This chain is Serine-rich adhesin for platelets (sasA), found in Staphylococcus aureus (strain MRSA252).